The primary structure comprises 460 residues: Endoglucanase C (460 aa).

The N-terminal stretch at methionine 1–alanine 32 is a signal peptide. Glutamate 99 serves as the catalytic Proton donor. Residue aspartate 155 is the Nucleophile of the active site. The Dockerin domain occupies lysine 400 to asparagine 460.

It belongs to the glycosyl hydrolase 8 (cellulase D) family. As to quaternary structure, monomer. Post-translationally, there are two forms of the cellulase. The shorter form lacks probably the C-terminal reiterated domains.

The catalysed reaction is Endohydrolysis of (1-&gt;4)-beta-D-glucosidic linkages in cellulose, lichenin and cereal beta-D-glucans.. The protein operates within glycan metabolism; cellulose degradation. Its function is as follows. The biological conversion of cellulose to glucose generally requires three types of hydrolytic enzymes: (1) Endoglucanases which cut internal beta-1,4-glucosidic bonds; (2) Exocellobiohydrolases that cut the disaccharide cellobiose from the non-reducing end of the cellulose polymer chain; (3) Beta-1,4-glucosidases which hydrolyze the cellobiose and other short cello-oligosaccharides to glucose. The sequence is that of Endoglucanase C (celCCC) from Ruminiclostridium cellulolyticum (strain ATCC 35319 / DSM 5812 / JCM 6584 / H10) (Clostridium cellulolyticum).